The following is a 397-amino-acid chain: 1-deoxy-D-xylulose 5-phosphate reductoisomerase (397 aa).

NADPH-binding residues include Thr10, Gly11, Ser12, Ile13, Gly36, Asn38, and Asn128. Lys129 serves as a coordination point for 1-deoxy-D-xylulose 5-phosphate. Glu130 provides a ligand contact to NADPH. Residue Asp154 participates in Mn(2+) binding. 1-deoxy-D-xylulose 5-phosphate is bound by residues Ser155, Glu156, Ser180, and His203. Residue Glu156 participates in Mn(2+) binding. Gly209 lines the NADPH pocket. 3 residues coordinate 1-deoxy-D-xylulose 5-phosphate: Asn221, Lys222, and Glu225. Residue Glu225 participates in Mn(2+) binding.

Belongs to the DXR family. Mg(2+) is required as a cofactor. It depends on Mn(2+) as a cofactor.

The catalysed reaction is 2-C-methyl-D-erythritol 4-phosphate + NADP(+) = 1-deoxy-D-xylulose 5-phosphate + NADPH + H(+). The protein operates within isoprenoid biosynthesis; isopentenyl diphosphate biosynthesis via DXP pathway; isopentenyl diphosphate from 1-deoxy-D-xylulose 5-phosphate: step 1/6. Catalyzes the NADPH-dependent rearrangement and reduction of 1-deoxy-D-xylulose-5-phosphate (DXP) to 2-C-methyl-D-erythritol 4-phosphate (MEP). In Solibacter usitatus (strain Ellin6076), this protein is 1-deoxy-D-xylulose 5-phosphate reductoisomerase.